We begin with the raw amino-acid sequence, 707 residues long: Protein MICRORCHIDIA 7 (707 aa).

Composition is skewed to basic and acidic residues over residues Met1 to Ile11 and Asp575 to Gly587. Disordered stretches follow at residues Met1–Pro22 and Glu568–Asp619. Over residues Ser590–Asn613 the composition is skewed to polar residues. Residues Gly620–Lys701 adopt a coiled-coil conformation. Positions Arg633–Glu640 match the Nuclear localization signal motif.

Belongs to the MORC ATPase protein family. As to quaternary structure, homodimer and heterodimer. Component of an RNA-directed DNA methylation (RdDM) complex. Forms homomeric complexes. The cofactor is Mg(2+). Mn(2+) is required as a cofactor.

It localises to the nucleus. In terms of biological role, exhibits ATPase activity. Binds DNA/RNA in a non-specific manner and exhibits endonuclease activity. Probably involved in DNA repair. Involved in RNA-directed DNA methylation (RdDM) as a component of the RdDM machinery and required for gene silencing. May also be involved in the regulation of chromatin architecture to maintain gene silencing. Together with MORC4, acts to suppress a wide set of non-methylated protein-coding genes, especially involved in pathogen response. Positive regulators of defense against the oomycete Hyaloperonospora arabidopsidis (Hpa). The polypeptide is Protein MICRORCHIDIA 7 (Arabidopsis thaliana (Mouse-ear cress)).